The primary structure comprises 393 residues: UPF0496 protein At2g18630 (393 aa).

The tract at residues 1-20 is disordered; sequence MMGGKSSKSKKNVEFGSPST. Residues 149–222 adopt a coiled-coil conformation; the sequence is VNQFEEENED…RLRNIKTWRR (74 aa). Transmembrane regions (helical) follow at residues 226-246 and 249-269; these read MVFV…AAVA and PVVA…GKWC. A coiled-coil region spans residues 299-356; that stretch reads KEMDNISILVRKVEVEIESLLKKAEFAITEEKEVRLAIDEIKKKLDVFTETIEELGEH.

The protein belongs to the UPF0496 family.

The protein resides in the membrane. This chain is UPF0496 protein At2g18630, found in Arabidopsis thaliana (Mouse-ear cress).